The chain runs to 396 residues: Acetate kinase (396 aa).

A Mg(2+)-binding site is contributed by Asn-8. Residue Lys-15 participates in ATP binding. A substrate-binding site is contributed by Arg-89. The active-site Proton donor/acceptor is the Asp-146. ATP-binding positions include 206–210 (HIGNG), 283–285 (DMR), and 331–335 (GVGEN). Glu-383 contacts Mg(2+).

It belongs to the acetokinase family. Homodimer. The cofactor is Mg(2+). Mn(2+) serves as cofactor.

It is found in the cytoplasm. The enzyme catalyses acetate + ATP = acetyl phosphate + ADP. Its pathway is metabolic intermediate biosynthesis; acetyl-CoA biosynthesis; acetyl-CoA from acetate: step 1/2. Functionally, catalyzes the formation of acetyl phosphate from acetate and ATP. Can also catalyze the reverse reaction. The protein is Acetate kinase of Streptococcus pneumoniae (strain JJA).